Consider the following 386-residue polypeptide: 4-hydroxy-3-methylbut-2-en-1-yl diphosphate synthase (flavodoxin) (386 aa).

Cys-281, Cys-284, Cys-316, and Glu-323 together coordinate [4Fe-4S] cluster.

The protein belongs to the IspG family. [4Fe-4S] cluster serves as cofactor.

It catalyses the reaction (2E)-4-hydroxy-3-methylbut-2-enyl diphosphate + oxidized [flavodoxin] + H2O + 2 H(+) = 2-C-methyl-D-erythritol 2,4-cyclic diphosphate + reduced [flavodoxin]. It functions in the pathway isoprenoid biosynthesis; isopentenyl diphosphate biosynthesis via DXP pathway; isopentenyl diphosphate from 1-deoxy-D-xylulose 5-phosphate: step 5/6. Converts 2C-methyl-D-erythritol 2,4-cyclodiphosphate (ME-2,4cPP) into 1-hydroxy-2-methyl-2-(E)-butenyl 4-diphosphate. This is 4-hydroxy-3-methylbut-2-en-1-yl diphosphate synthase (flavodoxin) from Corynebacterium jeikeium (strain K411).